The sequence spans 633 residues: Peptidoglycan D,D-transpeptidase MrdA (633 aa).

Residues 22 to 42 (LVAFLGILLLTGVLIANLYNL) form a helical membrane-spanning segment. Serine 330 acts as the Acyl-ester intermediate in catalysis.

The protein belongs to the transpeptidase family. MrdA subfamily.

The protein resides in the cell inner membrane. It catalyses the reaction Preferential cleavage: (Ac)2-L-Lys-D-Ala-|-D-Ala. Also transpeptidation of peptidyl-alanyl moieties that are N-acyl substituents of D-alanine.. It participates in cell wall biogenesis; peptidoglycan biosynthesis. Functionally, catalyzes cross-linking of the peptidoglycan cell wall. The sequence is that of Peptidoglycan D,D-transpeptidase MrdA from Escherichia coli O157:H7.